A 486-amino-acid polypeptide reads, in one-letter code: Glutamyl-tRNA(Gln) amidotransferase subunit A (486 aa).

Residues K75 and S150 each act as charge relay system in the active site. S174 (acyl-ester intermediate) is an active-site residue.

This sequence belongs to the amidase family. GatA subfamily. As to quaternary structure, heterotrimer of A, B and C subunits.

The catalysed reaction is L-glutamyl-tRNA(Gln) + L-glutamine + ATP + H2O = L-glutaminyl-tRNA(Gln) + L-glutamate + ADP + phosphate + H(+). Allows the formation of correctly charged Gln-tRNA(Gln) through the transamidation of misacylated Glu-tRNA(Gln) in organisms which lack glutaminyl-tRNA synthetase. The reaction takes place in the presence of glutamine and ATP through an activated gamma-phospho-Glu-tRNA(Gln). This chain is Glutamyl-tRNA(Gln) amidotransferase subunit A, found in Trichormus variabilis (strain ATCC 29413 / PCC 7937) (Anabaena variabilis).